A 416-amino-acid chain; its full sequence is Phosphoglycerate kinase (416 aa).

The residue at position 2 (Ser2) is an N-acetylserine. Residues Val23, Asp24, Phe25, Asn26, Gln38, Arg39, Ser62, His63, Gly65, and Arg66 each contribute to the (2R)-3-phosphoglycerate site. Lys82 is covalently cross-linked (Glycyl lysine isopeptide (Lys-Gly) (interchain with G-Cter in ubiquitin)). The residue at position 93 (Thr93) is a Phosphothreonine. At Ser110 the chain carries Phosphoserine. Residues Leu121 and Arg122 each coordinate (2R)-3-phosphoglycerate. A phosphoserine mark is found at Ser130 and Ser154. Positions 168 and 169 each coordinate (2R)-3-phosphoglycerate. Phosphoserine is present on Ser172. A Glycyl lysine isopeptide (Lys-Gly) (interchain with G-Cter in ubiquitin) cross-link involves residue Lys197. Position 203 is a phosphothreonine (Thr203). Gly212 is a binding site for ADP. Residue Gly212 participates in CDP binding. Positions 213 and 214 each coordinate AMP. ATP-binding residues include Ala213 and Lys214. Position 213 (Ala213) interacts with Mg(2+). Residues Ala216 and Asp217 each coordinate Mg(2+). Asp217 contacts CDP. Lys218 provides a ligand contact to AMP. Lys218 lines the ATP pocket. Position 236 (Gly236) interacts with ADP. Gly236 provides a ligand contact to CDP. Residue Gly237 participates in AMP binding. Gly237 serves as a coordination point for ATP. Phosphothreonine is present on Thr241. Glycyl lysine isopeptide (Lys-Gly) (interchain with G-Cter in ubiquitin) cross-links involve residues Lys258 and Lys274. Thr298 is subject to Phosphothreonine. Lys302 participates in a covalent cross-link: Glycyl lysine isopeptide (Lys-Gly) (interchain with G-Cter in ubiquitin). Position 311 (Gly311) interacts with AMP. ATP is bound by residues Gly311 and Leu312. Residue Ser318 is modified to Phosphoserine. Position 331 is a phosphothreonine (Thr331). Asn335 contacts ATP. CDP-binding residues include Gly336 and Phe341. An ADP-binding site is contributed by Phe341. Glu342 provides a ligand contact to AMP. Glu342 is a binding site for ATP. Gly371 serves as a coordination point for (2R)-3-phosphoglycerate. The ATP site is built by Asp373 and Thr374. Residue Asp373 participates in Mg(2+) binding. Phosphothreonine is present on Thr392. (2R)-3-phosphoglycerate contacts are provided by Gly394 and Gly395.

Belongs to the phosphoglycerate kinase family. Monomer. It depends on Mg(2+) as a cofactor.

Its subcellular location is the cytoplasm. The protein resides in the mitochondrion. It carries out the reaction (2R)-3-phosphoglycerate + ATP = (2R)-3-phospho-glyceroyl phosphate + ADP. The protein operates within carbohydrate degradation; glycolysis; pyruvate from D-glyceraldehyde 3-phosphate: step 2/5. Functionally, catalyzes one of the two ATP producing reactions in the glycolytic pathway via the reversible conversion of 1,3-diphosphoglycerate to 3-phosphoglycerate. Both L- and D- forms of purine and pyrimidine nucleotides can be used as substrates, but the activity is much lower on pyrimidines. Negatively regulates the biosynthesis of acetyl-CoA from pyruvate in the mitochondrion. The chain is Phosphoglycerate kinase (PGK1) from Saccharomyces cerevisiae (strain ATCC 204508 / S288c) (Baker's yeast).